The primary structure comprises 612 residues: Dihydroxy-acid dehydratase (612 aa).

Mg(2+) is bound at residue D81. C122 provides a ligand contact to [2Fe-2S] cluster. Mg(2+) is bound by residues D123 and K124. The residue at position 124 (K124) is an N6-carboxylysine. C195 is a binding site for [2Fe-2S] cluster. E491 lines the Mg(2+) pocket. S517 acts as the Proton acceptor in catalysis.

It belongs to the IlvD/Edd family. Homodimer. [2Fe-2S] cluster is required as a cofactor. The cofactor is Mg(2+).

The catalysed reaction is (2R)-2,3-dihydroxy-3-methylbutanoate = 3-methyl-2-oxobutanoate + H2O. The enzyme catalyses (2R,3R)-2,3-dihydroxy-3-methylpentanoate = (S)-3-methyl-2-oxopentanoate + H2O. The protein operates within amino-acid biosynthesis; L-isoleucine biosynthesis; L-isoleucine from 2-oxobutanoate: step 3/4. Its pathway is amino-acid biosynthesis; L-valine biosynthesis; L-valine from pyruvate: step 3/4. In terms of biological role, functions in the biosynthesis of branched-chain amino acids. Catalyzes the dehydration of (2R,3R)-2,3-dihydroxy-3-methylpentanoate (2,3-dihydroxy-3-methylvalerate) into 2-oxo-3-methylpentanoate (2-oxo-3-methylvalerate) and of (2R)-2,3-dihydroxy-3-methylbutanoate (2,3-dihydroxyisovalerate) into 2-oxo-3-methylbutanoate (2-oxoisovalerate), the penultimate precursor to L-isoleucine and L-valine, respectively. The polypeptide is Dihydroxy-acid dehydratase (Rhizobium etli (strain CIAT 652)).